Consider the following 447-residue polypeptide: Na(+)-translocating NADH-quinone reductase subunit A (447 aa).

This sequence belongs to the NqrA family. In terms of assembly, composed of six subunits; NqrA, NqrB, NqrC, NqrD, NqrE and NqrF.

It catalyses the reaction a ubiquinone + n Na(+)(in) + NADH + H(+) = a ubiquinol + n Na(+)(out) + NAD(+). NQR complex catalyzes the reduction of ubiquinone-1 to ubiquinol by two successive reactions, coupled with the transport of Na(+) ions from the cytoplasm to the periplasm. NqrA to NqrE are probably involved in the second step, the conversion of ubisemiquinone to ubiquinol. This is Na(+)-translocating NADH-quinone reductase subunit A from Yersinia pestis.